We begin with the raw amino-acid sequence, 330 residues long: Autoinducer 2 import system permease protein LsrD (330 aa).

Residues Met-1–Arg-4 lie on the Cytoplasmic side of the membrane. The helical transmembrane segment at Tyr-5 to Ile-25 threads the bilayer. Residues Asn-26–Phe-42 lie on the Periplasmic side of the membrane. The helical transmembrane segment at Ile-43 to Ile-63 threads the bilayer. The Cytoplasmic portion of the chain corresponds to Ser-64–Ser-67. 2 helical membrane passes run Thr-68–Leu-88 and Ala-89–Ile-109. The Cytoplasmic segment spans residues Tyr-110–Pro-115. Residues Leu-116–Met-136 form a helical membrane-spanning segment. Over Ala-137–Asp-159 the chain is Periplasmic. The chain crosses the membrane as a helical span at residues Val-160–Trp-180. Topologically, residues Leu-181–Arg-209 are cytoplasmic. A helical membrane pass occupies residues Thr-210–Val-230. Residues Ser-231–Arg-237 lie on the Periplasmic side of the membrane. The next 2 membrane-spanning stretches (helical) occupy residues Ser-238–Asn-258 and Ile-259–Leu-279. At Gln-280 to Met-285 the chain is on the periplasmic side. The chain crosses the membrane as a helical span at residues Ala-286 to Val-306. Topologically, residues Gly-307–Pro-330 are cytoplasmic.

This sequence belongs to the binding-protein-dependent transport system permease family. AraH/RbsC subfamily. The complex is composed of two ATP-binding proteins (LsrA), two transmembrane proteins (LsrC and LsrD) and a solute-binding protein (LsrB).

The protein resides in the cell inner membrane. In terms of biological role, part of the ABC transporter complex LsrABCD involved in autoinducer 2 (AI-2) import. Probably responsible for the translocation of the substrate across the membrane. This chain is Autoinducer 2 import system permease protein LsrD (lsrD), found in Escherichia coli (strain SMS-3-5 / SECEC).